The chain runs to 401 residues: Ornithine aminotransferase (401 aa).

Lys-258 carries the N6-(pyridoxal phosphate)lysine modification.

Belongs to the class-III pyridoxal-phosphate-dependent aminotransferase family. OAT subfamily. The cofactor is pyridoxal 5'-phosphate.

It localises to the cytoplasm. The catalysed reaction is a 2-oxocarboxylate + L-ornithine = L-glutamate 5-semialdehyde + an L-alpha-amino acid. The protein operates within amino-acid biosynthesis; L-proline biosynthesis; L-glutamate 5-semialdehyde from L-ornithine: step 1/1. In terms of biological role, catalyzes the interconversion of ornithine to glutamate semialdehyde. The chain is Ornithine aminotransferase from Bacillus subtilis (strain 168).